The sequence spans 515 residues: MECDLMETDILESLEDLGYKGPLLDDGALLQAVSAGAASPEFTKLCAWLVSELRVLCKLEENVQATNSPSEAEEFQLEVSGLLGEMNCPYPCLTSGDVTKRLLVQKNCLLLLTYLISELEAARMLCVNAPPKKAQEGGGSEVFQELKGICIALGMSKPPANITMFQFFSGIEKKLKETLAKVPPNHVGKPLLKKSMGPAHWEKIEAINQAIANEYEVRRKLLIKRLDVTVQSFGWSDRAKSQTEKLAKVYQPKRSVLSPKGNISIAHLLAARQDLSKILRTSSGSIREKTACAINKVLMGRVPDRGGRPNEIEPPPPEMPPWQKRQDGPQQQAGGRGGGRGGYEHSSYGGRGGHEQGGRGGRGGYDHGGRGGGRGNKHQGGWTDGGSASGGGYQDGGYRDPGFQPGGYHGGHSSGYQGGGYGGFQTSSYTGSGYQGGGYQQDNRYQDGGHHGERGSGRGGRGGRGGRGGRGSQGGGWGGRGSQTYHQGGQFEQHFQHGGYQYSHSGFGQGRHYTS.

2 disordered regions span residues 297-411 (VLMG…YHGG) and 432-515 (SGYQ…HYTS). Basic and acidic residues predominate over residues 302 to 311 (VPDRGGRPNE). A compositionally biased stretch (gly residues) spans 382–395 (WTDGGSASGGGYQD). The span at 444 to 456 (RYQDGGHHGERGS) shows a compositional bias: basic and acidic residues. The segment covering 457–481 (GRGGRGGRGGRGGRGSQGGGWGGRG) has biased composition (gly residues). A compositionally biased stretch (low complexity) spans 485–501 (YHQGGQFEQHFQHGGYQ). The span at 502–515 (YSHSGFGQGRHYTS) shows a compositional bias: polar residues.

Belongs to the FAM98 family. In terms of assembly, interacts (via N- and C-terminus) with DDX1. Interacts (via N- and C-terminus) with C14orf166. Interacts with FAM98B. Interacts with PLEKHM1 (via N- and C-terminus).

Positively stimulates PRMT1-induced protein arginine methylation. Involved in skeletal homeostasis. Positively regulates lysosome peripheral distribution and ruffled border formation in osteoclasts. This chain is Protein FAM98A, found in Rattus norvegicus (Rat).